The chain runs to 316 residues: Coproporphyrin III ferrochelatase (316 aa).

Residues tyrosine 13, arginine 30, 46–47 (RY), serine 54, and tyrosine 125 contribute to the Fe-coproporphyrin III site. 2 residues coordinate Fe(2+): histidine 183 and glutamate 264.

It belongs to the ferrochelatase family.

It is found in the cytoplasm. It catalyses the reaction Fe-coproporphyrin III + 2 H(+) = coproporphyrin III + Fe(2+). It functions in the pathway porphyrin-containing compound metabolism; protoheme biosynthesis. Involved in coproporphyrin-dependent heme b biosynthesis. Catalyzes the insertion of ferrous iron into coproporphyrin III to form Fe-coproporphyrin III. This chain is Coproporphyrin III ferrochelatase, found in Geobacillus thermodenitrificans (strain NG80-2).